Consider the following 207-residue polypeptide: Large ribosomal subunit protein uL4 (207 aa).

The disordered stretch occupies residues 49-78; it reads HAVKNRSAVSGGGRKPWRQKGTGRARQGSI.

It belongs to the universal ribosomal protein uL4 family. In terms of assembly, part of the 50S ribosomal subunit.

In terms of biological role, one of the primary rRNA binding proteins, this protein initially binds near the 5'-end of the 23S rRNA. It is important during the early stages of 50S assembly. It makes multiple contacts with different domains of the 23S rRNA in the assembled 50S subunit and ribosome. Its function is as follows. Forms part of the polypeptide exit tunnel. This chain is Large ribosomal subunit protein uL4, found in Streptococcus equi subsp. zooepidemicus (strain MGCS10565).